The chain runs to 190 residues: Protein GrpE (190 aa).

Disordered regions lie at residues 1-22 (MAEETNQSLEDQNVQVEEGQTI) and 170-190 (EEGESKQSIRPARVKVGKPQS). The segment covering 181 to 190 (ARVKVGKPQS) has biased composition (basic residues).

It belongs to the GrpE family. In terms of assembly, homodimer.

It localises to the cytoplasm. Participates actively in the response to hyperosmotic and heat shock by preventing the aggregation of stress-denatured proteins, in association with DnaK and GrpE. It is the nucleotide exchange factor for DnaK and may function as a thermosensor. Unfolded proteins bind initially to DnaJ; upon interaction with the DnaJ-bound protein, DnaK hydrolyzes its bound ATP, resulting in the formation of a stable complex. GrpE releases ADP from DnaK; ATP binding to DnaK triggers the release of the substrate protein, thus completing the reaction cycle. Several rounds of ATP-dependent interactions between DnaJ, DnaK and GrpE are required for fully efficient folding. The sequence is that of Protein GrpE from Leptospira biflexa serovar Patoc (strain Patoc 1 / Ames).